Consider the following 549-residue polypeptide: Probable protein kinase UbiB (549 aa).

The 379-residue stretch at 123 to 501 (NFDDTPLASA…QQKAHKSNYL (379 aa)) folds into the Protein kinase domain. ATP contacts are provided by residues 129–137 (LASASISQV) and Lys-152. Catalysis depends on Asp-287, which acts as the Proton acceptor. A run of 2 helical transmembrane segments spans residues 498-518 (SNYL…LFSQ) and 520-540 (ATLW…LLGW).

It belongs to the ABC1 family. UbiB subfamily.

It is found in the cell inner membrane. It participates in cofactor biosynthesis; ubiquinone biosynthesis [regulation]. Is probably a protein kinase regulator of UbiI activity which is involved in aerobic coenzyme Q (ubiquinone) biosynthesis. This chain is Probable protein kinase UbiB, found in Shewanella loihica (strain ATCC BAA-1088 / PV-4).